The primary structure comprises 533 residues: Probable bifunctional tRNA threonylcarbamoyladenosine biosynthesis protein (533 aa).

The kae1 stretch occupies residues 1-329 (MTRVLGIEGT…FRPDEVPVSW (329 aa)). His113 and His117 together coordinate Fe cation. L-threonylcarbamoyladenylate-binding positions include 134–138 (NASGA), Asp166, Gly179, Glu183, and Asn262. Asp290 contacts Fe cation. One can recognise a Protein kinase domain in the interval 338–533 (PVPTDERRQG…REIETRGRYQ (196 aa)). ATP-binding positions include 345–352 (RQGAEAVV) and Lys363. Asp452 serves as the catalytic Proton acceptor; for kinase activity.

In the N-terminal section; belongs to the KAE1 / TsaD family. The protein in the C-terminal section; belongs to the protein kinase superfamily. Tyr protein kinase family. BUD32 subfamily. As to quaternary structure, component of the KEOPS complex that consists of Kae1, Bud32, Cgi121 and Pcc1; the whole complex dimerizes. It depends on Fe(2+) as a cofactor.

It is found in the cytoplasm. It catalyses the reaction L-seryl-[protein] + ATP = O-phospho-L-seryl-[protein] + ADP + H(+). The catalysed reaction is L-threonyl-[protein] + ATP = O-phospho-L-threonyl-[protein] + ADP + H(+). The enzyme catalyses L-threonylcarbamoyladenylate + adenosine(37) in tRNA = N(6)-L-threonylcarbamoyladenosine(37) in tRNA + AMP + H(+). In terms of biological role, required for the formation of a threonylcarbamoyl group on adenosine at position 37 (t(6)A37) in tRNAs that read codons beginning with adenine. Is a component of the KEOPS complex that is probably involved in the transfer of the threonylcarbamoyl moiety of threonylcarbamoyl-AMP (TC-AMP) to the N6 group of A37. The Kae1 domain likely plays a direct catalytic role in this reaction. The Bud32 domain probably displays kinase activity that regulates Kae1 function. The protein is Probable bifunctional tRNA threonylcarbamoyladenosine biosynthesis protein of Natronomonas pharaonis (strain ATCC 35678 / DSM 2160 / CIP 103997 / JCM 8858 / NBRC 14720 / NCIMB 2260 / Gabara) (Halobacterium pharaonis).